The chain runs to 387 residues: 3-ketoacyl-CoA thiolase (387 aa).

The active-site Acyl-thioester intermediate is Cys91. Residues His343 and Cys373 each act as proton acceptor in the active site.

Belongs to the thiolase-like superfamily. Thiolase family. Heterotetramer of two alpha chains (FadB) and two beta chains (FadA).

It is found in the cytoplasm. The enzyme catalyses an acyl-CoA + acetyl-CoA = a 3-oxoacyl-CoA + CoA. Its pathway is lipid metabolism; fatty acid beta-oxidation. Its function is as follows. Catalyzes the final step of fatty acid oxidation in which acetyl-CoA is released and the CoA ester of a fatty acid two carbons shorter is formed. This is 3-ketoacyl-CoA thiolase from Escherichia coli O6:K15:H31 (strain 536 / UPEC).